Here is a 255-residue protein sequence, read N- to C-terminus: Tabinhibitin 1 (255 aa).

Positions 1–23 are cleaved as a signal peptide; sequence MTSILVSRFLIAALVLQYATSDA. The SCP domain maps to 67–211; it reads LSKINDVRDH…KARALLTCNF (145 aa).

It belongs to the CRISP family. As to expression, expressed in salivary glands.

Its subcellular location is the secreted. Functionally, inhibits platelet aggregation induced by all agonists tested. May act by competing with fibrinogen for binding to glycoprotein IIb/IIIa (ITGA2B/ITGB3). The chain is Tabinhibitin 1 from Tabanus yao (Horsefly).